Reading from the N-terminus, the 351-residue chain is Calcium homeostasis modulator 1 (351 aa).

The Cytoplasmic portion of the chain corresponds to 1 to 20 (MDKFRMMFQFLQSNQESFMN). The central pore stretch occupies residues 9-36 (QFLQSNQESFMNGICGIMALASAQMYSS). A helical membrane pass occupies residues 21–36 (GICGIMALASAQMYSS). Residues 37–48 (FEFSCPCMPEYN) lie on the Extracellular side of the membrane. Cystine bridges form between cysteine 41-cysteine 126 and cysteine 43-cysteine 160. Residues 49 to 71 (YTYGIGLLIIPPIWFFLLGFVLN) form a helical membrane-spanning segment. Residues 62-69 (WFFLLGFV) are phospholipid-binding. The Cytoplasmic portion of the chain corresponds to 72 to 98 (NNVSVLAEEWKRPTGRRTKDPSVLRYM). The helical transmembrane segment at 99 to 124 (LCSITQRSLIAPAVWVSVTLMDGKSF) threads the bilayer. The S-palmitoyl cysteine moiety is linked to residue cysteine 100. Residues 104–116 (QRSLIAPAVWVSV) are phospholipid-binding. At 125-177 (LCAFSINLDIEKFGNASLVIGMTETEKLKFLARIPCKDLFEDNEVRVAATRYI) the chain is on the extracellular side. N-linked (GlcNAc...) asparagine glycosylation is present at asparagine 139. Residues 178–203 (KCISQACGWMFLLMMTFTAFLIRAIR) traverse the membrane as a helical segment. A phospholipid-binding region spans residues 189-199 (LLMMTFTAFLI). Over 204–351 (PCFTQAAFLK…KEWAVYYSKV (148 aa)) the chain is Cytoplasmic. Residue cysteine 205 is the site of S-palmitoyl cysteine attachment. Residues 259 to 281 (HRHQSKDTSDAEEEEKQRSDEDK) form a disordered region. The segment covering 263 to 281 (SKDTSDAEEEEKQRSDEDK) has biased composition (basic and acidic residues).

The protein belongs to the CALHM family. Oligomerizes to form hexamers and octamers. Does not form gap junctions. Associates with CALHM3 as a pore-forming subunit in a hetero-hexameric channel complex. Post-translationally, N-glycosylated. In terms of processing, palmitoylated.

The protein resides in the cell membrane. The protein localises to the endoplasmic reticulum membrane. Its subcellular location is the basolateral cell membrane. The enzyme catalyses ATP(in) = ATP(out). It carries out the reaction Ca(2+)(in) = Ca(2+)(out). It catalyses the reaction Mg(2+)(in) = Mg(2+)(out). The catalysed reaction is Na(+)(in) = Na(+)(out). The enzyme catalyses K(+)(in) = K(+)(out). It carries out the reaction Li(+)(in) = Li(+)(out). It catalyses the reaction Rb(+)(in) = Rb(+)(out). The catalysed reaction is Cs(+)(in) = Cs(+)(out). The enzyme catalyses chloride(in) = chloride(out). With respect to regulation, activated in response to membrane depolarization and low extracellular Ca(2+) concentration. Inhibited by ruthenium red. Functionally, pore-forming subunit of a voltage-gated ion channel. Has poor ion selectivity and forms a wide pore that mediates permeation of small ions including Ca(2+), Na(+), K(+) and Cl(-), as well as larger ions such as ATP(4-). In Oryzias latipes (Japanese rice fish), this protein is Calcium homeostasis modulator 1.